A 190-amino-acid polypeptide reads, in one-letter code: dTTP/UTP pyrophosphatase (190 aa).

The active-site Proton acceptor is Asp71.

It belongs to the Maf family. YhdE subfamily. Requires a divalent metal cation as cofactor.

It is found in the cytoplasm. It catalyses the reaction dTTP + H2O = dTMP + diphosphate + H(+). It carries out the reaction UTP + H2O = UMP + diphosphate + H(+). In terms of biological role, nucleoside triphosphate pyrophosphatase that hydrolyzes dTTP and UTP. May have a dual role in cell division arrest and in preventing the incorporation of modified nucleotides into cellular nucleic acids. This Xanthomonas euvesicatoria pv. vesicatoria (strain 85-10) (Xanthomonas campestris pv. vesicatoria) protein is dTTP/UTP pyrophosphatase.